The sequence spans 24 residues: Humanin-like 12 (24 aa).

The protein belongs to the humanin family.

It localises to the secreted. The protein resides in the cytoplasm. Its function is as follows. Plays a role as a neuroprotective and antiapoptotic factor. The chain is Humanin-like 12 from Homo sapiens (Human).